Consider the following 845-residue polypeptide: uncharacterized protein (845 aa).

2 disordered regions span residues 17-37 (RRKQDALHSPSLNMDKKNDQP) and 550-573 (AATEAEVEDQNSERNDDNALNESL). Residues 622-707 (LSEQRFEREN…ELKKSNEHTR (86 aa)) are a coiled coil.

This is an uncharacterized protein from Saccharum officinarum (Sugarcane).